The chain runs to 913 residues: DNA mismatch repair protein MutS (913 aa).

Glycine 720 to serine 727 serves as a coordination point for ATP.

Belongs to the DNA mismatch repair MutS family.

Its function is as follows. This protein is involved in the repair of mismatches in DNA. It is possible that it carries out the mismatch recognition step. This protein has a weak ATPase activity. The protein is DNA mismatch repair protein MutS of Prochlorococcus marinus (strain AS9601).